Here is a 532-residue protein sequence, read N- to C-terminus: Phosphoenolpyruvate carboxykinase (ATP) (532 aa).

Substrate contacts are provided by arginine 58, tyrosine 194, and lysine 200. ATP-binding positions include lysine 200, histidine 220, and 236–244; that span reads GLSGTGKTT. Mn(2+)-binding residues include lysine 200 and histidine 220. Aspartate 257 serves as a coordination point for Mn(2+). ATP is bound by residues glutamate 285, arginine 322, 442–443, and threonine 448; that span reads RV. Arginine 322 contacts substrate.

This sequence belongs to the phosphoenolpyruvate carboxykinase (ATP) family. Mn(2+) serves as cofactor.

The protein resides in the cytoplasm. It catalyses the reaction oxaloacetate + ATP = phosphoenolpyruvate + ADP + CO2. The protein operates within carbohydrate biosynthesis; gluconeogenesis. In terms of biological role, involved in the gluconeogenesis. Catalyzes the conversion of oxaloacetate (OAA) to phosphoenolpyruvate (PEP) through direct phosphoryl transfer between the nucleoside triphosphate and OAA. In Rubrobacter xylanophilus (strain DSM 9941 / JCM 11954 / NBRC 16129 / PRD-1), this protein is Phosphoenolpyruvate carboxykinase (ATP).